A 279-amino-acid chain; its full sequence is uncharacterized protein (279 aa).

This is an uncharacterized protein from Caenorhabditis elegans.